Here is a 188-residue protein sequence, read N- to C-terminus: MVSVNDLKTGLTIKTSDGMIWQVLEFQHVKPGKGAAFVRTKMRNIRNGNIQEMTFRGGERVERAHIERNKMQYLYPMGETYVFMDTESYEQLELTTAQVEAALPFLLENMEVQIAIYNGEVLGIELPNTIVMTIVEAEPGVKGDTASNVKKNATVETGHIIHVPLFIEAGEKVTVDTRTGDFTGRYNG.

This sequence belongs to the elongation factor P family.

The protein localises to the cytoplasm. It participates in protein biosynthesis; polypeptide chain elongation. Involved in peptide bond synthesis. Stimulates efficient translation and peptide-bond synthesis on native or reconstituted 70S ribosomes in vitro. Probably functions indirectly by altering the affinity of the ribosome for aminoacyl-tRNA, thus increasing their reactivity as acceptors for peptidyl transferase. In Exiguobacterium sibiricum (strain DSM 17290 / CCUG 55495 / CIP 109462 / JCM 13490 / 255-15), this protein is Elongation factor P.